The primary structure comprises 527 residues: ATP synthase subunit alpha (527 aa).

177–184 contacts ATP; sequence GDRQTGKT.

Belongs to the ATPase alpha/beta chains family. In terms of assembly, F-type ATPases have 2 components, CF(1) - the catalytic core - and CF(0) - the membrane proton channel. CF(1) has five subunits: alpha(3), beta(3), gamma(1), delta(1), epsilon(1). CF(0) has four main subunits: a(1), b(1), b'(1) and c(9-12).

The protein localises to the cell membrane. The catalysed reaction is ATP + H2O + 4 H(+)(in) = ADP + phosphate + 5 H(+)(out). In terms of biological role, produces ATP from ADP in the presence of a proton gradient across the membrane. The alpha chain is a regulatory subunit. This Roseiflexus sp. (strain RS-1) protein is ATP synthase subunit alpha.